Reading from the N-terminus, the 545-residue chain is MAAFTANAVDMRPPVITIHPRSKDIFSQFSLDDKLQKQYAQGIEALKEEARSMLMAAKSAKVMILIDTLERLGLGYHFEKEIEEKLEAIYKKEDGDDYDLFTTALRFRLLRQHQRRVPCSVFDKFMNKEGKFEEEPLISDVEGLLSLYDAAYLQIHGEHILQEALIFTTHHLTRIEPQLDDHSPLKLKLNRALEFPFYREIPIIYAHFYISVYERDDSRDEVLLKMAKLSYNFLQNLYKKELSQLSRWWNKLELIPNLPYIRDSVAGAYLWAVALYFEPQYSDVRMAIAKLIQIAAAVDDTYDNYATIREAQLLTEALERLNVHEIDTLPDYMKIVYRFVMSWSEDFERDATIKEQMLATPYFKAEMKKLGRAYNQELKWVMERQLPSFEEYMKNSEITSGVYIMFTVISPYLNSATQKNIDWLLSQPRLASSTAIVMRCCNDLGSNQRESKGGEVMTSLDCYMKQHGASKQETISKFKLIIEDEWKNLNEEWAATTCLPKVMVEIFRNYARIAGFCYKNNGDAYTSPKIVQQCFDALFVNPLRI.

Mg(2+) is bound by residues Asp299, Asp303, Asn442, and Glu450. The DDXXD motif motif lies at 299 to 303 (DDTYD).

This sequence belongs to the terpene synthase family. Requires Mg(2+) as cofactor.

The protein localises to the cytoplasm. It is found in the cytosol. The enzyme catalyses (2E,6E)-farnesyl diphosphate = gamma-curcumene + diphosphate. Its pathway is secondary metabolite biosynthesis; terpenoid biosynthesis. In terms of biological role, sesquiterpene synthase involved in gamma-curcumene biosynthesis. The chain is Gamma-curcumene synthase from Pogostemon cablin (Patchouli).